The sequence spans 105 residues: Large ribosomal subunit protein uL22 (105 aa).

The protein belongs to the universal ribosomal protein uL22 family. In terms of assembly, part of the 50S ribosomal subunit.

In terms of biological role, this protein binds specifically to 23S rRNA; its binding is stimulated by other ribosomal proteins, e.g. L4, L17, and L20. It is important during the early stages of 50S assembly. It makes multiple contacts with different domains of the 23S rRNA in the assembled 50S subunit and ribosome. Its function is as follows. The globular domain of the protein is located near the polypeptide exit tunnel on the outside of the subunit, while an extended beta-hairpin is found that lines the wall of the exit tunnel in the center of the 70S ribosome. In Sulfurimonas denitrificans (strain ATCC 33889 / DSM 1251) (Thiomicrospira denitrificans (strain ATCC 33889 / DSM 1251)), this protein is Large ribosomal subunit protein uL22.